The following is a 574-amino-acid chain: MSSGIILLIVAIVLLVIIAYLIGVIIRKRNDSMIGTLEDRKQHLFGLPVNEEIEEVKELHLIGQSQTSFREWNQKWVDLTLNSFADIENHLFEAEKYNDTFNFIRAKHEINNVESQLNLVEEDITSIREALSILKEQEEKNSARVTHALDLYEKLQSSVAENDSHFGTTKPEIEKQMKNIETEFSQFVTLNSSGDPVEASEVLDRAEEHTIALGQITEQIPAIVAKLEDEFPDQLDDLESGYRRLLEDNYHFAENNIEEKFQEIREAIRSNASELVSLDLDRAREENSHIQERIDNMYALFEHEIKAFKVSAKHSKIIPSYLEHAKSNNDKLKEEMTRLSRKYILNENQASTVQGFEKEIEDVEKNVLELAKDFKGQEIPYSELQVVFEKNLKTLSAVESGQMEVFESIKNIENIEEDARKEADLYVTQLHMIKRFMEKRHLPGIPQDYLNVFFTTSTQLEALMDELSKGKINIEAVSRLRDVASASIANLEDYTYQVVENATLTEQLLQYSNRYRSFEAGVQNSFEIAMHLFEVEYDYQASFDEISYALETVEPGVTDRFVSSYERTREHIRF.

The Extracellular segment spans residues 1-7; it reads MSSGIIL. The chain crosses the membrane as a helical span at residues 8 to 26; it reads LIVAIVLLVIIAYLIGVII. At 27-574 the chain is on the cytoplasmic side; the sequence is RKRNDSMIGT…YERTREHIRF (548 aa). Coiled-coil stretches lie at residues 102-140, 243-379, and 459-520; these read NFIR…QEEK, RRLL…GQEI, and QLEA…SFEA.

Belongs to the EzrA family.

Its subcellular location is the cell membrane. In terms of biological role, negative regulator of FtsZ ring formation; modulates the frequency and position of FtsZ ring formation. Inhibits FtsZ ring formation at polar sites. Interacts either with FtsZ or with one of its binding partners to promote depolymerization. This is Septation ring formation regulator EzrA from Streptococcus uberis (strain ATCC BAA-854 / 0140J).